A 528-amino-acid polypeptide reads, in one-letter code: (R)-citramalate synthase (528 aa).

Residues 4 to 266 (VKLYDTTLRD…RECIGDDQLR (263 aa)) form the Pyruvate carboxyltransferase domain.

Belongs to the alpha-IPM synthase/homocitrate synthase family.

It catalyses the reaction pyruvate + acetyl-CoA + H2O = (3R)-citramalate + CoA + H(+). Its pathway is amino-acid biosynthesis; L-isoleucine biosynthesis; 2-oxobutanoate from pyruvate: step 1/3. Functionally, catalyzes the condensation of pyruvate and acetyl-coenzyme A to form (R)-citramalate. Makes part of the main pathway for isoleucine biosynthesis in G.sulfurreducens, i.e. the citramalate-dependent pathway. The sequence is that of (R)-citramalate synthase from Geobacter sulfurreducens (strain ATCC 51573 / DSM 12127 / PCA).